The following is a 705-amino-acid chain: Dynein axonemal intermediate chain 1 (705 aa).

Disordered regions lie at residues 1-44 (MPSK…AVRP) and 122-169 (AGSQ…DVPA). 2 positions are modified to phosphoserine: Ser-124 and Ser-127. Over residues 124–135 (SQESVKVVTSDT) the composition is skewed to polar residues. A compositionally biased stretch (acidic residues) spans 136–159 (EILEEEEEPKEGEGEGEGEAEGEA). WD repeat units lie at residues 386–426 (SSES…SQPC), 435–478 (KHTD…LVHI), 543–583 (AHNM…PMFI), 585–625 (DLNA…YEAI), and 633–672 (KKKN…RKMP).

This sequence belongs to the dynein intermediate chain family. As to quaternary structure, consists of at least two heavy chains and a number of intermediate and light chains. Interacts with BICD2. Interacts with CFAP45 and CFAP52. Interacts with CFAP53.

It localises to the cytoplasm. The protein localises to the cytoskeleton. It is found in the cilium axoneme. Its function is as follows. Part of the dynein complex of respiratory cilia. The protein is Dynein axonemal intermediate chain 1 (Dnai1) of Rattus norvegicus (Rat).